Here is a 409-residue protein sequence, read N- to C-terminus: Peptidase T (409 aa).

His-79 serves as a coordination point for Zn(2+). The active site involves Asp-81. Position 140 (Asp-140) interacts with Zn(2+). The active-site Proton acceptor is Glu-174. Residues Glu-175, Asp-197, and His-379 each contribute to the Zn(2+) site.

The protein belongs to the peptidase M20B family. Zn(2+) serves as cofactor.

The protein resides in the cytoplasm. It catalyses the reaction Release of the N-terminal residue from a tripeptide.. In terms of biological role, cleaves the N-terminal amino acid of tripeptides. The polypeptide is Peptidase T (Lysinibacillus sphaericus (strain C3-41)).